The chain runs to 685 residues: DNA ligase (685 aa).

Residues 39–43, 88–89, and Glu-119 contribute to the NAD(+) site; these read DGEYD and SL. Lys-121 functions as the N6-AMP-lysine intermediate in the catalytic mechanism. NAD(+) contacts are provided by Arg-142, Glu-182, Lys-302, and Lys-326. Cys-420, Cys-423, Cys-438, and Cys-443 together coordinate Zn(2+). A BRCT domain is found at 606–685; the sequence is DNATFFSEKR…QTFLEHLDRG (80 aa).

Belongs to the NAD-dependent DNA ligase family. LigA subfamily. Requires Mg(2+) as cofactor. Mn(2+) serves as cofactor.

The enzyme catalyses NAD(+) + (deoxyribonucleotide)n-3'-hydroxyl + 5'-phospho-(deoxyribonucleotide)m = (deoxyribonucleotide)n+m + AMP + beta-nicotinamide D-nucleotide.. Functionally, DNA ligase that catalyzes the formation of phosphodiester linkages between 5'-phosphoryl and 3'-hydroxyl groups in double-stranded DNA using NAD as a coenzyme and as the energy source for the reaction. It is essential for DNA replication and repair of damaged DNA. In Desulforapulum autotrophicum (strain ATCC 43914 / DSM 3382 / VKM B-1955 / HRM2) (Desulfobacterium autotrophicum), this protein is DNA ligase.